A 104-amino-acid polypeptide reads, in one-letter code: uncharacterized protein (104 aa).

An N-terminal signal peptide occupies residues 1–18 (MGVEGMWNVFLFSLQVAA). N27 carries N-linked (GlcNAc...) asparagine; by host glycosylation.

This is an uncharacterized protein from Fowl adenovirus A serotype 1 (strain CELO / Phelps) (FAdV-1).